We begin with the raw amino-acid sequence, 262 residues long: MLKMRLLLTWVLLVLPLVNALKCANNRVLRKYHIDKHSAKKSVARDTPPSKTTEKWYVNPCEEHPADDIYDGCDKSDDICGIVMVDLPVFNKDPFVIKRIEATDMASFTATEESNALVLRYTGISWGQNMVAANIRYFCDKNSNEDEITSSIWANNDISIIIKGPSGCKKDSSELEDGDVEESSGLSWFTWLFIYAIFFTVVYLVVTSYTQTRGGSIDDFRHDFVERAKQFFTSLPAFVREVVSKVLGSAPNAAERGGYSAV.

The first 20 residues, 1–20, serve as a signal peptide directing secretion; the sequence is MLKMRLLLTWVLLVLPLVNA. Residues 21 to 170 form the MRH domain; the sequence is LKCANNRVLR…IIKGPSGCKK (150 aa). Over 21-185 the chain is Lumenal; that stretch reads LKCANNRVLR…EDGDVEESSG (165 aa). 3 disulfide bridges follow: C23–C61, C73–C80, and C139–C168. A helical membrane pass occupies residues 186–206; sequence LSWFTWLFIYAIFFTVVYLVV. At 207-262 the chain is on the cytoplasmic side; it reads TSYTQTRGGSIDDFRHDFVERAKQFFTSLPAFVREVVSKVLGSAPNAAERGGYSAV.

This sequence belongs to the ATG27 family.

The protein resides in the cytoplasmic vesicle membrane. The protein localises to the golgi apparatus membrane. It is found in the mitochondrion membrane. Functionally, regulates the cytoplasm to vacuole transport (Cvt) vesicle formation. The protein is Autophagy-related protein 27 (ATG27) of Vanderwaltozyma polyspora (strain ATCC 22028 / DSM 70294 / BCRC 21397 / CBS 2163 / NBRC 10782 / NRRL Y-8283 / UCD 57-17) (Kluyveromyces polysporus).